We begin with the raw amino-acid sequence, 141 residues long: HTH-type transcriptional repressor NsrR (141 aa).

Residues 2 to 129 enclose the HTH rrf2-type domain; the sequence is QLTSFTDYGL…DNYTLADLVE (128 aa). Positions 28–51 form a DNA-binding region, H-T-H motif; sequence ISEVTEVYGVSRNHMVKIINQLSR. Cysteine 91, cysteine 96, and cysteine 102 together coordinate [2Fe-2S] cluster.

[2Fe-2S] cluster serves as cofactor.

Functionally, nitric oxide-sensitive repressor of genes involved in protecting the cell against nitrosative stress. May require iron for activity. This chain is HTH-type transcriptional repressor NsrR, found in Klebsiella pneumoniae subsp. pneumoniae (strain ATCC 700721 / MGH 78578).